Consider the following 136-residue polypeptide: Holo-[acyl-carrier-protein] synthase (136 aa).

Mg(2+) is bound by residues aspartate 8 and glutamate 57.

The protein belongs to the P-Pant transferase superfamily. AcpS family. Mg(2+) serves as cofactor.

Its subcellular location is the cytoplasm. It catalyses the reaction apo-[ACP] + CoA = holo-[ACP] + adenosine 3',5'-bisphosphate + H(+). Its function is as follows. Transfers the 4'-phosphopantetheine moiety from coenzyme A to a Ser of acyl-carrier-protein. The sequence is that of Holo-[acyl-carrier-protein] synthase from Methylorubrum extorquens (strain CM4 / NCIMB 13688) (Methylobacterium extorquens).